The sequence spans 359 residues: Phospho-N-acetylmuramoyl-pentapeptide-transferase (359 aa).

The next 10 helical transmembrane spans lie at 21–41, 73–93, 98–118, 143–163, 166–186, 202–222, 237–257, 261–281, 286–306, and 336–356; these read YITF…FLLG, TMGG…WADL, IWVT…DDYL, GICL…VPFF, VAPD…VGTS, PLVI…NAII, VTVF…FNAY, IFMG…VAII, ILLT…IFQV, and KIIV…VSTL.

This sequence belongs to the glycosyltransferase 4 family. MraY subfamily. The cofactor is Mg(2+).

The protein localises to the cell inner membrane. It carries out the reaction UDP-N-acetyl-alpha-D-muramoyl-L-alanyl-gamma-D-glutamyl-meso-2,6-diaminopimeloyl-D-alanyl-D-alanine + di-trans,octa-cis-undecaprenyl phosphate = di-trans,octa-cis-undecaprenyl diphospho-N-acetyl-alpha-D-muramoyl-L-alanyl-D-glutamyl-meso-2,6-diaminopimeloyl-D-alanyl-D-alanine + UMP. It participates in cell wall biogenesis; peptidoglycan biosynthesis. Its function is as follows. Catalyzes the initial step of the lipid cycle reactions in the biosynthesis of the cell wall peptidoglycan: transfers peptidoglycan precursor phospho-MurNAc-pentapeptide from UDP-MurNAc-pentapeptide onto the lipid carrier undecaprenyl phosphate, yielding undecaprenyl-pyrophosphoryl-MurNAc-pentapeptide, known as lipid I. The protein is Phospho-N-acetylmuramoyl-pentapeptide-transferase of Desulfosudis oleivorans (strain DSM 6200 / JCM 39069 / Hxd3) (Desulfococcus oleovorans).